The chain runs to 101 residues: MIEKMVKESEKGILIDIEVTTNAKKNEIGKINEWRKRIEIRIKEQPIEGKANKAIIKFLKGIFKSEILINSGTTSSQKTVLIPDKTKDDVVTILKKEIKSI.

This sequence belongs to the UPF0235 family.

This chain is UPF0235 protein MMP1055, found in Methanococcus maripaludis (strain DSM 14266 / JCM 13030 / NBRC 101832 / S2 / LL).